The following is a 491-amino-acid chain: Monodehydroascorbate reductase 5, chlorplastic (491 aa).

Residues 1 to 42 (MASTAAAASSQGCISWALRQRGLGGGGARAVPVLPRRRFCVS) constitute a chloroplast transit peptide. FAD-binding positions include 61–64 (GGNA), glutamate 88, arginine 95, lysine 100, and 194–195 (RD). NAD(+) is bound by residues 217–223 (GGYIGME), glutamate 241, arginine 247, and glycine 306. An NADP(+)-binding site is contributed by 219 to 223 (YIGME). NADP(+)-binding residues include arginine 247 and glycine 306. An FAD-binding site is contributed by aspartate 344. 360–361 (EH) provides a ligand contact to NAD(+). 360–361 (EH) provides a ligand contact to NADP(+). Valine 362 is an FAD binding site. Arginine 366 contributes to the L-ascorbate binding site. Tyrosine 391 is an FAD binding site. Tyrosine 391 provides a ligand contact to NAD(+). Position 391 (tyrosine 391) interacts with NADP(+). Arginine 393 contributes to the L-ascorbate binding site.

The protein belongs to the FAD-dependent oxidoreductase family. Requires FAD as cofactor.

It localises to the plastid. The protein localises to the chloroplast. It catalyses the reaction 2 monodehydro-L-ascorbate radical + NADH + H(+) = 2 L-ascorbate + NAD(+). In terms of biological role, catalyzes the conversion of monodehydroascorbate to ascorbate, oxidizing NADH in the process. Ascorbate is a major antioxidant against reactive oxygen species (ROS) and nitric oxide (NO). This is Monodehydroascorbate reductase 5, chlorplastic from Oryza sativa subsp. japonica (Rice).